A 187-amino-acid polypeptide reads, in one-letter code: MVLEKRGVVKPEEGVRALLEHLGEDVTRPGVVDTPKRFVKALGELTRGLREPPPEVVFFPLEYDAEPGPVVIENISAVSLCEHHLLPILLSVSVAYIPGDGVPGLSKVIRLVKWAAARPIMQERFTEWLADLLMEKLRARAVAVEVCGVHMCSFIRGVRDEHHNMVTRAKRGDIDVKLRCRRPPLCR.

Residues Cys81, His84, and Cys152 each coordinate Zn(2+).

Belongs to the GTP cyclohydrolase I family. In terms of assembly, homomer.

It catalyses the reaction GTP + H2O = 7,8-dihydroneopterin 3'-triphosphate + formate + H(+). It functions in the pathway cofactor biosynthesis; 7,8-dihydroneopterin triphosphate biosynthesis; 7,8-dihydroneopterin triphosphate from GTP: step 1/1. This is GTP cyclohydrolase 1 from Pyrobaculum neutrophilum (strain DSM 2338 / JCM 9278 / NBRC 100436 / V24Sta) (Thermoproteus neutrophilus).